A 33-amino-acid polypeptide reads, in one-letter code: Defensin-1 (33 aa).

3 disulfides stabilise this stretch: Cys-4–Cys-32, Cys-6–Cys-21, and Cys-11–Cys-31.

This sequence belongs to the alpha-defensin family.

It localises to the secreted. Has antibacterial activity against the Gram-negative bacterium E.coli and the Gram-positive bacteria L.monocytogenes and S.aureus. Has antifungal activity against C.albicans. The chain is Defensin-1 from Papio hamadryas (Hamadryas baboon).